We begin with the raw amino-acid sequence, 546 residues long: MLSKEIKFGEEARRALERGVDTLANAVKVTLGPKGRNVVLDRKFGSPTITNDGVTIARDIDLKDPWENLGCQLVKEVAIKTNDVAGDGTTTATLLAQAMIKEGLKNVAAGANPMIMRRGIDQAVKAVVDEIKTLSKPVESRDSIAQVAAISADDPEIGQLIADAMEKVGRDGVITVEESQSVGTSLEVVEGMNFDRGYISPYMITNTEKMEAVLEDPYILISDKKISSIGEVLPVLEKVVQTGKPMLLIAEEVEGEALATLVVNKLRGTFNCVAVKAPAFGERRKAMLEDIAILTNGQVASEELGVKMENVSLDMLGKARQIVIKKDETIIVDGAGSEQAIRDRSANIKRQLEETESEYDREKLQERLAKLSGGVAVIQVGAATETELKERKHRIEDALAATKAAVEEGIVSGGGVTLINAIKAIEKIEAQGDELTGINLVKKAMEEPLRQIANNAGIEGSVVVEKVKEAETGIGYNALTGVYESMIAAGIIDPAKVTRSAVQNAASISAMVLTTEAVVSELPGEDEMKGMGAGGMGGMGGMGGMM.

Residues 30–33 (TLGP), 87–91 (DGTTT), Gly414, 477–479 (NAL), and Asp493 each bind ATP.

This sequence belongs to the chaperonin (HSP60) family. In terms of assembly, forms a cylinder of 14 subunits composed of two heptameric rings stacked back-to-back. Interacts with the co-chaperonin GroES.

The protein localises to the cytoplasm. The catalysed reaction is ATP + H2O + a folded polypeptide = ADP + phosphate + an unfolded polypeptide.. In terms of biological role, together with its co-chaperonin GroES, plays an essential role in assisting protein folding. The GroEL-GroES system forms a nano-cage that allows encapsulation of the non-native substrate proteins and provides a physical environment optimized to promote and accelerate protein folding. In Syntrophomonas wolfei subsp. wolfei (strain DSM 2245B / Goettingen), this protein is Chaperonin GroEL.